A 457-amino-acid polypeptide reads, in one-letter code: GTPase Era, mitochondrial (457 aa).

The transit peptide at 1–18 directs the protein to the mitochondrion; the sequence is MAFRVSISTFGKSLRVRR. One can recognise an Era-type G domain in the interval 107-350; sequence KVLRVAIIGA…RYLVVGAKPG (244 aa). The interval 115-122 is G1; that stretch reads GAPNAGKS. Residue 115-122 participates in GTP binding; sequence GAPNAGKS. The tract at residues 141 to 145 is G2; that stretch reads HTTRA. A G3 region spans residues 162–165; sequence DTPG. GTP contacts are provided by residues 162–166 and 231–234; these read DTPGL and NKVD. The segment at 231 to 234 is G4; that stretch reads NKVD. The segment covering 270-290 has biased composition (basic and acidic residues); that stretch reads AERRTDREARTSGSGDEEKPG. Residues 270–300 are disordered; sequence AERRTDREARTSGSGDEEKPGGDVADGEGSE. Residues 328–330 form a G5 region; it reads VSA. Residues 376–457 form the KH type-2 domain; the sequence is LLEYLPKEVP…KLRLSVKVKN (82 aa).

It belongs to the TRAFAC class TrmE-Era-EngA-EngB-Septin-like GTPase superfamily. Era GTPase family.

Its subcellular location is the mitochondrion matrix. It is found in the mitochondrion inner membrane. Functionally, probable GTPase that plays a role in the mitochondrial ribosomal small subunit assembly. Specifically binds the 12S mitochondrial rRNA (12S mt-rRNA) to a 33 nucleotide section delineating the 3' terminal stem-loop region. May act as a chaperone that protects the 12S mt-rRNA on the 28S mitoribosomal subunit during ribosomal small subunit assembly. The sequence is that of GTPase Era, mitochondrial (eral1) from Salmo salar (Atlantic salmon).